Here is a 1001-residue protein sequence, read N- to C-terminus: Ulvan lyase, long isoform (1001 aa).

The signal sequence occupies residues M1–A21. A substrate-binding site is contributed by S126–H127. Residue H127 is the Proton donor/acceptor of the active site. The Ca(2+) site is built by D189, D199, and K201. Substrate contacts are provided by Y280 and R297. Ca(2+) is bound by residues D300, D303, and Y305. Y361 lines the substrate pocket.

It belongs to the polysaccharide lyase 24 family.

Ulvan lyase involved in ulvan degradation. Ulvan is the main polysaccharide component of the Ulvales (green seaweed) cell wall. It is composed of disaccharide building blocks comprising 3-sulfated rhamnose (Rha3S) linked to D-glucuronic acid (GlcA), L-iduronic acid (IduA), or D-xylose (Xyl). Ulvan lyase catalyzes preferentially the endolytic cleavage of the glycosidic bond between Rha3S and the uronic acid GlcA, but not IduA, producing oligosaccharides that have unsaturated 4-deoxy-L-threo-hex-4-enopyranosiduronic acid (deltaUA) at the non-reducing end. The most abundant end products in the degradation of the ulvan polysaccharide were deltaUA-Rha3S disaccharides and deltaUA-Rha3S-IduA-Rha3S and deltaUA-Rha3S-Xyl-Rha3S tetrasaccharides. This chain is Ulvan lyase, long isoform, found in Pseudoalteromonas sp. (strain PLSV).